The sequence spans 481 residues: Extracellular exo-alpha-(1-&gt;5)-L-arabinofuranosidase (481 aa).

A signal peptide spans 1–27; that stretch reads MRRLTVRLFTAVLAALALLTMGTPAHA. The segment at 37–336 is catalytic; that stretch reads FTNPLAEKRA…KVYWNADGTP (300 aa). The Proton acceptor role is filled by D47. Position 186 (N186) interacts with substrate. E223 (proton donor) is an active-site residue. Substrate-binding positions include H287, R321, 363–366, D379, 457–460, and D475; these read HWDF and HYEN. The interval 349-479 is ABD; the sequence is VRFSSYNYPD…ALDRQDATFY (131 aa).

This sequence belongs to the glycosyl hydrolase 43 family.

It localises to the secreted. It catalyses the reaction Hydrolysis of terminal non-reducing alpha-L-arabinofuranoside residues in alpha-L-arabinosides.. It functions in the pathway glycan metabolism; L-arabinan degradation. Its function is as follows. Involved in the degradation of arabinan and is a key enzyme in the complete degradation of the plant cell wall. Catalyzes only the cleavage of terminal alpha-(1-&gt;5) arabinofuranosyl bonds of arabinan present in the arabinofuranosyl polysaccharides or oligosaccharides. It cannot act on other arabinose-containing polysaccharides and arabinoxylo-oligosaccharides. The protein is Extracellular exo-alpha-(1-&gt;5)-L-arabinofuranosidase of Streptomyces avermitilis (strain ATCC 31267 / DSM 46492 / JCM 5070 / NBRC 14893 / NCIMB 12804 / NRRL 8165 / MA-4680).